Consider the following 2049-residue polypeptide: Nonribosomal peptide synthetase tcpP (2049 aa).

Residues R13 to N395 are adenylation 1. The Carrier 1 domain occupies A497–D573. An O-(pantetheine 4'-phosphoryl)serine modification is found at S534. The interval R605–S913 is condensation 1. An adenylation 2 region spans residues V1071–R1452. Residues D1550–L1625 form the Carrier 2 domain. The residue at position 1585 (S1585) is an O-(pantetheine 4'-phosphoryl)serine. Positions M1662–D2044 are condensation 2.

It belongs to the NRP synthetase family.

The protein operates within secondary metabolite biosynthesis. Its function is as follows. Nonribosomal peptide synthetase; part of the gene cluster that mediates the biosynthesis of an unusual class of epipolythiodioxopiperazines (ETPs) lacking the reactive thiol group important for toxicity. Firstly, L-tyrosine is prenylated by tcpD, before undergoing condensation with L-glycine in a reaction catalyzed by the NRPS tcpP leading to the diketopiperazine (DKP) backbone. Afterwards the alpha-carbon of tyrosine is oxidized by the cytochrome P450 tcpC to form a hydroxyl group. However, in contrast other ETP biosynthesis pathways studied so far, tcpC is not able to bishydroxylate the DKP at both alpha-carbon positions, but hydroxylates the alpha-carbon of the tyrosine part and the nitrogen of the glycine part. The next steps involve an alpha,beta-elimination reaction catalyzed by tcpI, a methylation by the methyltransferase tcpN the action of the four enzyme cascade tcpG/K/J/I. Due to a dysfunctional cytochrome P450 monooxygenase tcpC, the pathway leads to the biosynthesis of probable non-toxic metabolites lacking the reactive thiol group. This Claviceps purpurea (strain 20.1) (Ergot fungus) protein is Nonribosomal peptide synthetase tcpP.